Consider the following 616-residue polypeptide: UvrABC system protein C (616 aa).

In terms of domain architecture, GIY-YIG spans 21–99; sequence HQPGVYRMYD…IKLYLPKYNV (79 aa). Positions 209-244 constitute a UVR domain; it reads RQVIASLVEKMEQASQSLNFEQAATFRDQIQALRRV.

The protein belongs to the UvrC family. Interacts with UvrB in an incision complex.

It is found in the cytoplasm. Functionally, the UvrABC repair system catalyzes the recognition and processing of DNA lesions. UvrC both incises the 5' and 3' sides of the lesion. The N-terminal half is responsible for the 3' incision and the C-terminal half is responsible for the 5' incision. The sequence is that of UvrABC system protein C from Photobacterium profundum (strain SS9).